The primary structure comprises 219 residues: MTQDEMKKAAGWAALKYVEKDSIVGVGTGSTVNHFIDALATMKADIEGAVSSSEASTQKMKALGIPVYDLNSVDKLSVYVDGADEINGHMDMIKGGGAALTREKIVAAVAEKFVCIVDNTKQVDILGEFPLPVEVIPMARSYVARQLVKLGGDPVYREGVITDNGNVILDVYNLKILNPKELEDKINAIVGVVTNGLFAKRGADVLLVGTPEGVKTFTA.

Residues 28 to 31 (TGST), 81 to 84 (DGAD), and 94 to 97 (KGGG) contribute to the substrate site. Glu103 acts as the Proton acceptor in catalysis. Lys121 serves as a coordination point for substrate.

The protein belongs to the ribose 5-phosphate isomerase family. Homodimer.

It catalyses the reaction aldehydo-D-ribose 5-phosphate = D-ribulose 5-phosphate. It functions in the pathway carbohydrate degradation; pentose phosphate pathway; D-ribose 5-phosphate from D-ribulose 5-phosphate (non-oxidative stage): step 1/1. In terms of biological role, catalyzes the reversible conversion of ribose-5-phosphate to ribulose 5-phosphate. The protein is Ribose-5-phosphate isomerase A of Shewanella oneidensis (strain ATCC 700550 / JCM 31522 / CIP 106686 / LMG 19005 / NCIMB 14063 / MR-1).